The primary structure comprises 908 residues: UPF0182 protein Csac_0864 (908 aa).

A run of 7 helical transmembrane segments spans residues 22–42, 62–82, 98–118, 166–186, 208–228, 253–273, and 286–306; these read FVISILVILAIVFSIAFDLFL, FYVKLSVQVVSFMILFFVFFV, ISLLKKNILNVIVSVLLALIA, FLFYLVIFVCIYTVVLYIVLY, HIFFNLILIFVIKIFTLKYEM, YFRLSYIVLVAVILLSIYFFI, and SYIGWAVLGTIIATAFQYFVV.

Belongs to the UPF0182 family.

The protein resides in the cell membrane. The protein is UPF0182 protein Csac_0864 of Caldicellulosiruptor saccharolyticus (strain ATCC 43494 / DSM 8903 / Tp8T 6331).